A 612-amino-acid chain; its full sequence is uncharacterized protein (612 aa).

This is an uncharacterized protein from Rickettsia prowazekii (strain Madrid E).